Consider the following 397-residue polypeptide: Protein WRKY1 (397 aa).

Positions 326–392 (KVADIPADEF…YEGDHNHNRV (67 aa)) form a DNA-binding region, WRKY.

This sequence belongs to the WRKY group II-d family. In terms of assembly, interacts with RS2. In terms of tissue distribution, more abundant in apices and young leaf primordia than in fully expanded leaf tissues.

The protein resides in the nucleus. Its function is as follows. Transcription factor. Interacts specifically with the W box (5'-(T)TGAC[CT]-3'), a frequently occurring elicitor-responsive cis-acting element. This is Protein WRKY1 from Zea mays (Maize).